A 547-amino-acid chain; its full sequence is MAAKQVLFADEARVRIVRGVNVLANAVKTTLGPKGRNVVLERSFGAPTVTKDGVSVAKEIELKDKFENIGAQLVKDVASKTSDNAGDGTTTATVLAQAVVQEGLKYVAAGFNPIDLKRGIDKAVAAAVEELKKLSKPVTTSKEIAQVGSISANSDASIGQIIADAMDKVGKEGVITVEDGKSLENELDVVEGMQFDRGYLSPYFINSPEKQVAALDDPYVLIYDKKVSNIRDLLPVLEQVAKSSRPLLIIAEDVEGEALATLVVNNIRGILKTTAVKAPGFGDRRKAMLEDIAILTGGTVISEETGMSLEKATLQDLGQAKRIEVAKENTTIIDGAGDGKSIEARVKQIRAQIEEATSDYDREKLQERVAKLAGGVAVIRVGAATEVEMKEKKARVEDALHATRAAVEEGVVPGGGVALLRAKQAITGLKGDTADQNAGIKLILRAVEEPLRTIVTNAGDEASVVVNTVLNGKGNYGYNAATGEYGDLVEQGVLDPTKVTRTALQNAASVASLLLTAEAAVVELMEDKPAAAPAMPGGMGGMGGMDF.

Residues 30 to 33, lysine 51, 87 to 91, glycine 415, 479 to 481, and aspartate 495 contribute to the ATP site; these read TLGP, DGTTT, and NAA.

This sequence belongs to the chaperonin (HSP60) family. Forms a cylinder of 14 subunits composed of two heptameric rings stacked back-to-back. Interacts with the co-chaperonin GroES.

It localises to the cytoplasm. The catalysed reaction is ATP + H2O + a folded polypeptide = ADP + phosphate + an unfolded polypeptide.. Functionally, together with its co-chaperonin GroES, plays an essential role in assisting protein folding. The GroEL-GroES system forms a nano-cage that allows encapsulation of the non-native substrate proteins and provides a physical environment optimized to promote and accelerate protein folding. The protein is Chaperonin GroEL of Bordetella bronchiseptica (strain ATCC BAA-588 / NCTC 13252 / RB50) (Alcaligenes bronchisepticus).